A 293-amino-acid polypeptide reads, in one-letter code: Ribonuclease P/MRP protein subunit RPP1 (293 aa).

It belongs to the eukaryotic/archaeal RNase P protein component 3 family. As to quaternary structure, component of nuclear RNase P and RNase MRP complexes. RNase P consists of an RNA moiety and at least 9 protein subunits including POP1, POP3, POP4, POP5, POP6, POP7, POP8, RPP1 and RPR2. RNase MRP complex consists of an RNA moiety and at least 10 protein subunits including POP1, POP3, POP4, POP5, POP6, POP7, POP8, RMP1, RPP1 and SNM1, many of which are shared with the RNase P complex.

The protein resides in the nucleus. It catalyses the reaction Endonucleolytic cleavage of RNA, removing 5'-extranucleotides from tRNA precursor.. Functionally, component of ribonuclease P, a protein complex that generates mature tRNA molecules by cleaving their 5'-ends. Also a component of RNase MRP, which cleaves pre-rRNA sequences. The chain is Ribonuclease P/MRP protein subunit RPP1 (RPP1) from Saccharomyces cerevisiae (strain ATCC 204508 / S288c) (Baker's yeast).